The primary structure comprises 251 residues: Triosephosphate isomerase 1 (251 aa).

A substrate-binding site is contributed by 9 to 11 (NWK). H95 (electrophile) is an active-site residue. The active-site Proton acceptor is E167. Substrate contacts are provided by residues G173, S213, and 234-235 (GG).

Belongs to the triosephosphate isomerase family. In terms of assembly, homodimer.

The protein localises to the cytoplasm. The enzyme catalyses D-glyceraldehyde 3-phosphate = dihydroxyacetone phosphate. Its pathway is carbohydrate biosynthesis; gluconeogenesis. It functions in the pathway carbohydrate degradation; glycolysis; D-glyceraldehyde 3-phosphate from glycerone phosphate: step 1/1. In terms of biological role, involved in the gluconeogenesis. Catalyzes stereospecifically the conversion of dihydroxyacetone phosphate (DHAP) to D-glyceraldehyde-3-phosphate (G3P). This Listeria innocua serovar 6a (strain ATCC BAA-680 / CLIP 11262) protein is Triosephosphate isomerase 1.